Here is a 317-residue protein sequence, read N- to C-terminus: 4-hydroxy-3-methylbut-2-enyl diphosphate reductase (317 aa).

[4Fe-4S] cluster is bound at residue cysteine 12. The (2E)-4-hydroxy-3-methylbut-2-enyl diphosphate site is built by histidine 41 and histidine 74. Positions 41 and 74 each coordinate dimethylallyl diphosphate. The isopentenyl diphosphate site is built by histidine 41 and histidine 74. Cysteine 96 is a [4Fe-4S] cluster binding site. Histidine 124 serves as a coordination point for (2E)-4-hydroxy-3-methylbut-2-enyl diphosphate. Histidine 124 serves as a coordination point for dimethylallyl diphosphate. Histidine 124 is an isopentenyl diphosphate binding site. The active-site Proton donor is glutamate 126. Position 169 (threonine 169) interacts with (2E)-4-hydroxy-3-methylbut-2-enyl diphosphate. Cysteine 199 contacts [4Fe-4S] cluster. Residues serine 227, serine 228, asparagine 229, and serine 271 each contribute to the (2E)-4-hydroxy-3-methylbut-2-enyl diphosphate site. 4 residues coordinate dimethylallyl diphosphate: serine 227, serine 228, asparagine 229, and serine 271. Isopentenyl diphosphate contacts are provided by serine 227, serine 228, asparagine 229, and serine 271.

The protein belongs to the IspH family. The cofactor is [4Fe-4S] cluster.

The enzyme catalyses isopentenyl diphosphate + 2 oxidized [2Fe-2S]-[ferredoxin] + H2O = (2E)-4-hydroxy-3-methylbut-2-enyl diphosphate + 2 reduced [2Fe-2S]-[ferredoxin] + 2 H(+). It catalyses the reaction dimethylallyl diphosphate + 2 oxidized [2Fe-2S]-[ferredoxin] + H2O = (2E)-4-hydroxy-3-methylbut-2-enyl diphosphate + 2 reduced [2Fe-2S]-[ferredoxin] + 2 H(+). It participates in isoprenoid biosynthesis; dimethylallyl diphosphate biosynthesis; dimethylallyl diphosphate from (2E)-4-hydroxy-3-methylbutenyl diphosphate: step 1/1. Its pathway is isoprenoid biosynthesis; isopentenyl diphosphate biosynthesis via DXP pathway; isopentenyl diphosphate from 1-deoxy-D-xylulose 5-phosphate: step 6/6. In terms of biological role, catalyzes the conversion of 1-hydroxy-2-methyl-2-(E)-butenyl 4-diphosphate (HMBPP) into a mixture of isopentenyl diphosphate (IPP) and dimethylallyl diphosphate (DMAPP). Acts in the terminal step of the DOXP/MEP pathway for isoprenoid precursor biosynthesis. The polypeptide is 4-hydroxy-3-methylbut-2-enyl diphosphate reductase (Vibrio parahaemolyticus serotype O3:K6 (strain RIMD 2210633)).